The chain runs to 222 residues: WAP four-disulfide core domain protein 1 (222 aa).

Residues 1 to 32 form the signal peptide; sequence MDSRMLSDQRFCRRIFAAALCVLVLLADSGCA. Residues 61-110 form the WAP domain; that stretch reads HYQKNDRCPPPPQTLPDRACEVPSCRSDSECERHKRCCYNGCIYACLESV. 4 cysteine pairs are disulfide-bonded: Cys-68-Cys-98, Cys-80-Cys-102, Cys-85-Cys-97, and Cys-91-Cys-106.

The protein resides in the secreted. Functionally, has growth inhibitory activity. This chain is WAP four-disulfide core domain protein 1 (WFDC1), found in Gallus gallus (Chicken).